The primary structure comprises 299 residues: Hairy/enhancer-of-split related with YRPW motif protein 1 (299 aa).

Positions 1-53 (MKRAHPDYSSSDSELDETIEVEKESADENGNLSSALCSMSPTTSSQVLARKRR) are disordered. Positions 28–47 (ENGNLSSALCSMSPTTSSQV) are enriched in polar residues. A transcriptional repression and interaction with NCOR1 and SIN3A region spans residues 48–117 (LARKRRRGII…GGKGYFDAHA (70 aa)). Residues 49–104 (ARKRRRGIIEKRRRDRINNSLSELRRLVPSAFEKQGSAKLEKAEILQMTVDHLKML) enclose the bHLH domain. An Orange domain is found at 122 to 158 (YRSLGFRECLAEVARYLSIIEGLDASDPLLVRLVSHL). The tract at residues 194-234 (LLLPQNGHGNAGTAASPTEPHHQGRLASAHPEAPALRAPPS) is disordered. Residues 289-292 (YRPW) carry the YRPW motif motif.

It belongs to the HEY family. In terms of assembly, may self-associate. Interacts with HES1, NCOR1 and SIN3A. Interacts with GATA4, GATA6 and HDAC1 and HEYL. Interacts with CCDC89/BOIP. In terms of tissue distribution, expressed in somitic mesoderm, brain, central nervous system, kidney, heart, nasal epithelium, limbs, lung, muscle, ovary and testis.

The protein localises to the nucleus. Transcriptional repressor which binds preferentially to the canonical E box sequence 5'-CACGTG-3'. Downstream effector of Notch signaling required for cardiovascular development. Specifically required for the Notch-induced endocardial epithelial to mesenchymal transition, which is itself criticial for cardiac valve and septum development. May be required in conjunction with HEY2 to specify arterial cell fate or identity. Promotes maintenance of neuronal precursor cells and glial versus neuronal fate specification. Represses transcription by the cardiac transcriptional activators GATA4 and GATA6 and by the neuronal bHLH factors ASCL1/MASH1 and NEUROD4/MATH3. The sequence is that of Hairy/enhancer-of-split related with YRPW motif protein 1 (Hey1) from Mus musculus (Mouse).